The primary structure comprises 248 residues: Ubiquinone/menaquinone biosynthesis C-methyltransferase UbiE (248 aa).

S-adenosyl-L-methionine-binding residues include Ser68 and Asp92.

It belongs to the class I-like SAM-binding methyltransferase superfamily. MenG/UbiE family.

It carries out the reaction a 2-demethylmenaquinol + S-adenosyl-L-methionine = a menaquinol + S-adenosyl-L-homocysteine + H(+). It catalyses the reaction a 2-methoxy-6-(all-trans-polyprenyl)benzene-1,4-diol + S-adenosyl-L-methionine = a 5-methoxy-2-methyl-3-(all-trans-polyprenyl)benzene-1,4-diol + S-adenosyl-L-homocysteine + H(+). It functions in the pathway quinol/quinone metabolism; menaquinone biosynthesis; menaquinol from 1,4-dihydroxy-2-naphthoate: step 2/2. The protein operates within cofactor biosynthesis; ubiquinone biosynthesis. Functionally, methyltransferase required for the conversion of demethylmenaquinol (DMKH2) to menaquinol (MKH2) and the conversion of 2-polyprenyl-6-methoxy-1,4-benzoquinol (DDMQH2) to 2-polyprenyl-3-methyl-6-methoxy-1,4-benzoquinol (DMQH2). This is Ubiquinone/menaquinone biosynthesis C-methyltransferase UbiE from Rickettsia massiliae (strain Mtu5).